We begin with the raw amino-acid sequence, 472 residues long: DNA-cytosine methyltransferase (472 aa).

An SAM-dependent MTase C5-type domain is found at 87–457 (FRFIDLFAGI…KLLEPKIKQA (371 aa)). Residue C177 is part of the active site.

It belongs to the class I-like SAM-binding methyltransferase superfamily. C5-methyltransferase family.

The catalysed reaction is a 2'-deoxycytidine in DNA + S-adenosyl-L-methionine = a 5-methyl-2'-deoxycytidine in DNA + S-adenosyl-L-homocysteine + H(+). In terms of biological role, this methylase recognizes the double-stranded sequence 5'-CCWGG-3', methylates C-2 on both strands. The protein is DNA-cytosine methyltransferase (dcm) of Escherichia coli O157:H7.